A 363-amino-acid polypeptide reads, in one-letter code: uncharacterized protein (363 aa).

Positions 1-20 (MKRAPLITGLLLISTSCAYA) are cleaved as a signal peptide.

The protein belongs to the fimbrial protein family.

It is found in the fimbrium. In terms of biological role, part of the yraHIJK fimbrial operon. Could contribute to adhesion to various surfaces in specific environmental niches. Increases adhesion to eukaryotic T24 bladder epithelial cells in the absence of fim operon. This is an uncharacterized protein from Escherichia coli (strain K12).